A 390-amino-acid polypeptide reads, in one-letter code: Dual-specificity RNA methyltransferase RlmN (390 aa).

The active-site Proton acceptor is the glutamate 110. Positions glutamate 116 to aspartate 355 constitute a Radical SAM core domain. Cysteines 123 and 360 form a disulfide. Positions 130, 134, and 137 each coordinate [4Fe-4S] cluster. S-adenosyl-L-methionine contacts are provided by residues glycine 184 to glutamate 185, serine 216, serine 238 to histidine 240, and asparagine 317. Cysteine 360 (S-methylcysteine intermediate) is an active-site residue.

Belongs to the radical SAM superfamily. RlmN family. The cofactor is [4Fe-4S] cluster.

Its subcellular location is the cytoplasm. It catalyses the reaction adenosine(2503) in 23S rRNA + 2 reduced [2Fe-2S]-[ferredoxin] + 2 S-adenosyl-L-methionine = 2-methyladenosine(2503) in 23S rRNA + 5'-deoxyadenosine + L-methionine + 2 oxidized [2Fe-2S]-[ferredoxin] + S-adenosyl-L-homocysteine. The catalysed reaction is adenosine(37) in tRNA + 2 reduced [2Fe-2S]-[ferredoxin] + 2 S-adenosyl-L-methionine = 2-methyladenosine(37) in tRNA + 5'-deoxyadenosine + L-methionine + 2 oxidized [2Fe-2S]-[ferredoxin] + S-adenosyl-L-homocysteine. Specifically methylates position 2 of adenine 2503 in 23S rRNA and position 2 of adenine 37 in tRNAs. m2A2503 modification seems to play a crucial role in the proofreading step occurring at the peptidyl transferase center and thus would serve to optimize ribosomal fidelity. This chain is Dual-specificity RNA methyltransferase RlmN, found in Haemophilus influenzae (strain PittEE).